The primary structure comprises 1184 residues: Calcium-activated potassium channel subunit alpha-1a (1184 aa).

Over 1–39 the chain is Extracellular; the sequence is MSNNINFNKNPDSSVSISKMDVIIPFTPDVPCDNNGQRM. The helical transmembrane segment at 40–60 threads the bilayer; that stretch reads WWAFLASSMVTFFGGLFIILL. The Cytoplasmic portion of the chain corresponds to 61–132; it reads WRTLKYLWTV…MISAQTLTGR (72 aa). Residues Cys-71, Cys-72, and Cys-74 are each lipidated (S-palmitoyl cysteine). Residues 133-153 traverse the membrane as a helical segment; it reads VLVVLVFALSIGALGIYFIDS. Topologically, residues 154–168 are extracellular; that stretch reads SDPIESCQNFYKDFT. The helical transmembrane segment at 169–189 threads the bilayer; the sequence is LQIDMAFNVFFLLYFGLRFIA. The Cytoplasmic segment spans residues 190–193; that stretch reads ANDK. A helical transmembrane segment spans residues 194 to 214; sequence LWFWLEVNSVVDFFTVPPVFV. Residues 215–254 are Extracellular-facing; the sequence is SVYLNRSWLGLRFLRALRLIQFSEILQFLNILKTSNSIKL. A helical transmembrane segment spans residues 255–275; sequence VNLCSIFISTWLTAAGFIHLV. The Cytoplasmic portion of the chain corresponds to 276 to 289; it reads ENSGDPWENFQNSQ. A helical membrane pass occupies residues 290–310; it reads PLSYWECVYLLMVTMSTVGYG. Topologically, residues 311–321 are extracellular; it reads DVYARTTLGRL. Residues 322–342 traverse the membrane as a helical segment; it reads FMVFFILGGLAMFASYVPEII. Over 343–1184 the chain is Cytoplasmic; the sequence is ELIGNRKKYG…PPIREVEDEC (842 aa). Residues 361 to 503 enclose the RCK N-terminal 1 domain; it reads RKHIVVCGHI…WNWKEGDDAI (143 aa). Mg(2+) contacts are provided by Glu-393, Gln-416, and Glu-418. Asn-468 is a Ca(2+) binding site. Residues 655-677 form a disordered region; it reads EHPSTLSPKKKQRNGGMRNSPNC. Phosphothreonine is present on Thr-659. Ser-661, Ser-674, and Ser-678 each carry phosphoserine. The region spanning 735–879 is the RCK N-terminal 2 domain; sequence SGHVVVCIFG…MDRSSPDNSP (145 aa). The residue at position 866 (Thr-866) is a Phosphothreonine. A phosphoserine mark is found at Ser-874 and Ser-878. Ca(2+)-binding residues include Gln-908, Asp-911, Asp-914, and Asp-916. The short motif at 908–916 is the Calcium bowl element; that stretch reads QFLDQDDDD. Residues 1082 to 1143 are disordered; it reads RASLSHSSHS…PEKRWFTDEA (62 aa). A compositionally biased stretch (low complexity) spans 1084 to 1104; it reads SLSHSSHSSHSSSKKSSSVHS. A compositionally biased stretch (basic and acidic residues) spans 1116-1125; sequence KAREARDKQN.

The protein belongs to the potassium channel family. Calcium-activated (TC 1.A.1.3) subfamily. KCa1.1/KCNMA1 sub-subfamily. As to quaternary structure, homotetramer; which constitutes the calcium-activated potassium channel. In terms of processing, phosphorylated. Post-translationally, palmitoylated.

The protein localises to the cell membrane. It carries out the reaction K(+)(in) = K(+)(out). Its function is as follows. Potassium channel activated by both membrane depolarization or increase in cytosolic Ca(2+) that mediates export of K(+). It is also activated by the concentration of cytosolic Mg(2+). Its activation dampens the excitatory events that elevate the cytosolic Ca(2+) concentration and/or depolarize the cell membrane. It therefore contributes to repolarization of the membrane potential. Involved in determining peripheral auditory sensitivity. The protein is Calcium-activated potassium channel subunit alpha-1a of Danio rerio (Zebrafish).